The primary structure comprises 200 residues: MSFSPLIRQLIDALRTLPGVGQKTAQRMALQLLERDRSGGLRLAQALSQAMEGVGHCRQCRTLTEDELCPQCADPRRDDTLLCVVEGPMDVYAVEQTGYRGRYFVLKGHLSPLDGLGPEAIGIPQLLARIEEQGSFSEVILATNPTVEGEATAHYIAQLLTNKGLITSRIAHGVPLGGELELVDGGTLAHSFAGRKPIAL.

Residues 57 to 72 (CRQCRTLTEDELCPQC) form a C4-type zinc finger. Residues 80-175 (TLLCVVEGPM…ITSRIAHGVP (96 aa)) enclose the Toprim domain.

It belongs to the RecR family.

Functionally, may play a role in DNA repair. It seems to be involved in an RecBC-independent recombinational process of DNA repair. It may act with RecF and RecO. The sequence is that of Recombination protein RecR from Pseudomonas fluorescens (strain ATCC BAA-477 / NRRL B-23932 / Pf-5).